The chain runs to 635 residues: GTPase-GDP dissociation stimulator vimar (635 aa).

ARM repeat units lie at residues K72 to Y118, T346 to I391, P392 to D432, and R510 to V550.

As to quaternary structure, interacts with Miro.

The protein resides in the endoplasmic reticulum. It is found in the mitochondrion. Its subcellular location is the cytoplasm. The protein localises to the cytosol. Probably acts as a GEF (guanine nucleotide exchange factor) for the Rho family of small GTP-binding proteins (G proteins) that stimulates the dissociation of GDP to enable subsequent binding of GTP. May also chaperone the processing and/or trafficking of small GTPases independently of GEF activity. By interacting with Miro, promotes mitochondrial fission in response to high calcium concentrations. This is GTPase-GDP dissociation stimulator vimar from Drosophila melanogaster (Fruit fly).